A 631-amino-acid polypeptide reads, in one-letter code: Acurin A biosynthesis cluster transcription regulator (631 aa).

Over residues 1 to 11 (MSPNMSLTASH) the composition is skewed to polar residues. The disordered stretch occupies residues 1–28 (MSPNMSLTASHPQQPQPTPQSKAQLTRQ). The segment at residues 30–62 (CNRCHASKLKCLRPPGVTTSKSCIRCIKADTEC) is a DNA-binding region (zn(2)-C6 fungal-type). 3 disordered regions span residues 64-141 (YDPP…PDNR), 489-522 (CSSS…HPAT), and 536-573 (HSSS…YPTP). A compositionally biased stretch (basic and acidic residues) spans 88 to 99 (IEAREPEVTDPR). The span at 119-128 (NGSLAPSSAA) shows a compositional bias: polar residues.

It is found in the nucleus. Functionally, transcription factor that positively regulates the expression of the cluster that mediates the biosynthesis of acurin A, a highly reduced polyketide coupled to a serine via a peptide bond. The chain is Acurin A biosynthesis cluster transcription regulator from Aspergillus aculeatus (strain ATCC 16872 / CBS 172.66 / WB 5094).